The primary structure comprises 257 residues: UPF0246 protein YaaA (257 aa).

The protein belongs to the UPF0246 family.

In Salmonella choleraesuis (strain SC-B67), this protein is UPF0246 protein YaaA.